Reading from the N-terminus, the 848-residue chain is Protein NETWORKED 2C (848 aa).

Residues 10-90 (YSWWWASHVR…ERYDHISKEL (81 aa)) form the NAB domain. Residues 108-141 (FAMNEDDDDDAPVSPRHHKNKTSNKNVPKVPDLP) form a disordered region. Coiled coils occupy residues 172–204 (LSKT…SYEN), 241–278 (EAQI…SRKQ), 305–454 (SEKE…KATN), and 752–797 (AKFE…SEEF).

It belongs to the NET family.

Its function is as follows. Plant-specific actin binding protein. May be part of a membrane-cytoskeletal adapter complex. The protein is Protein NETWORKED 2C of Arabidopsis thaliana (Mouse-ear cress).